Reading from the N-terminus, the 234-residue chain is Small ribosomal subunit protein uS3 (234 aa).

A KH type-2 domain is found at 39 to 107 (IRKFLKKELY…EVSINIKEVK (69 aa)).

This sequence belongs to the universal ribosomal protein uS3 family. In terms of assembly, part of the 30S ribosomal subunit. Forms a tight complex with proteins S10 and S14.

In terms of biological role, binds the lower part of the 30S subunit head. Binds mRNA in the 70S ribosome, positioning it for translation. This chain is Small ribosomal subunit protein uS3, found in Helicobacter pylori (strain G27).